The primary structure comprises 745 residues: 5-methyltetrahydropteroyltriglutamate--homocysteine methyltransferase (745 aa).

5-methyltetrahydropteroyltri-L-glutamate-binding positions include 19 to 22 (RELK) and K119. L-homocysteine is bound by residues 418–420 (IGS) and E471. Residues 418 to 420 (IGS) and E471 each bind L-methionine. Residues 502-503 (RC) and W548 contribute to the 5-methyltetrahydropteroyltri-L-glutamate site. D586 is an L-homocysteine binding site. L-methionine is bound at residue D586. Residue E592 participates in 5-methyltetrahydropteroyltri-L-glutamate binding. 3 residues coordinate Zn(2+): H628, C630, and E652. Residue H681 is the Proton donor of the active site. Residue C713 participates in Zn(2+) binding.

Belongs to the vitamin-B12 independent methionine synthase family. Zn(2+) serves as cofactor.

The enzyme catalyses 5-methyltetrahydropteroyltri-L-glutamate + L-homocysteine = tetrahydropteroyltri-L-glutamate + L-methionine. The protein operates within amino-acid biosynthesis; L-methionine biosynthesis via de novo pathway; L-methionine from L-homocysteine (MetE route): step 1/1. Catalyzes the transfer of a methyl group from 5-methyltetrahydrofolate to homocysteine resulting in methionine formation. The polypeptide is 5-methyltetrahydropteroyltriglutamate--homocysteine methyltransferase (Corynebacterium glutamicum (strain ATCC 13032 / DSM 20300 / JCM 1318 / BCRC 11384 / CCUG 27702 / LMG 3730 / NBRC 12168 / NCIMB 10025 / NRRL B-2784 / 534)).